We begin with the raw amino-acid sequence, 227 residues long: MSVVPPNRSQTGWPRGVNQFGNKYIQQTKPLTLERTINLYPLTNYTFGTKEPLYEKDSSVAARFQRMREEFDKIGMRRTVEGVLIVHEHRLPHVLLLQLGTTFFKLPGGELNPGEDEVEGLKRLMTEILGRQDGVLQDWVIDDCIGNWWRPNFEPPQYPYIPAHITKPKEHKKLFLVQLQEKALFAVPKNYKLVAAPLFELYDNAPGYGPIISSLPQLLSRFNFIYN.

Residue Ser2 is modified to N-acetylserine. The necessary for RNA-binding stretch occupies residues 2-147 (SVVPPNRSQT…DWVIDDCIGN (146 aa)). Position 15 is an omega-N-methylarginine (Arg15). N6-acetyllysine occurs at positions 23 and 29. Position 40 is a phosphotyrosine (Tyr40). Position 56 is an N6-acetyllysine (Lys56). In terms of domain architecture, Nudix hydrolase spans 76–201 (MRRTVEGVLI…KLVAAPLFEL (126 aa)). The necessary for interactions with PAPOLA and PABPN1 stretch occupies residues 81 to 160 (EGVLIVHEHR…PNFEPPQYPY (80 aa)). Residues 102-104 (TFF) are interaction with RNA. The Nudix box motif lies at 109-130 (GELNPGEDEVEGLKRLMTEILG).

It belongs to the Nudix hydrolase family. CPSF5 subfamily. In terms of assembly, homodimer (via N- and C-terminus); binds RNA as homodimer. Component of the cleavage factor Im (CFIm) complex which is a heterotetramer composed of two subunits of NUDT21/CPSF5 and two subunits of CPSF6 or CPSF7 or a heterodimer of CPSF6 and CPSF7. The cleavage factor Im (CFIm) complex associates with the CPSF and CSTF complexes to promote the assembly of the core mRNA 3'-processing machinery. Interacts with CPSF6 (via the RRM domain); this interaction is direct and enhances binding to RNA. Interacts with CPSF7. Interacts with FIP1L1; this interaction occurs in a RNA sequence-specific manner. Interacts with PABPN1. Interacts (via N-terminus) with PAPOLA (via C-terminus); this interaction is direct and diminished by acetylation. Interacts with SNRNP70. Interacts with VIRMA. Acetylated mainly by p300/CBP, recruited to the complex by CPSF6. Acetylation decreases interaction with PAPAO. Deacetylated by the class I/II HDACs, HDAC1, HDAC3 and HDAC10, and by the class III HDACs, SIRT1 and SIRT2. In terms of tissue distribution, expressed in testis. Expressed in male germ cells (at protein level).

It localises to the nucleus. The protein localises to the cytoplasm. Component of the cleavage factor Im (CFIm) complex that functions as an activator of the pre-mRNA 3'-end cleavage and polyadenylation processing required for the maturation of pre-mRNA into functional mRNAs. CFIm contributes to the recruitment of multiprotein complexes on specific sequences on the pre-mRNA 3'-end, so called cleavage and polyadenylation signals (pA signals). Most pre-mRNAs contain multiple pA signals, resulting in alternative cleavage and polyadenylation (APA) producing mRNAs with variable 3'-end formation. The CFIm complex acts as a key regulator of cleavage and polyadenylation site choice during APA through its binding to 5'-UGUA-3' elements localized in the 3'-untranslated region (UTR) for a huge number of pre-mRNAs. NUDT21/CPSF5 activates indirectly the mRNA 3'-processing machinery by recruiting CPSF6 and/or CPSF7. Binds to 5'-UGUA-3' elements localized upstream of pA signals that act as enhancers of pre-mRNA 3'-end processing. The homodimer mediates simultaneous sequence-specific recognition of two 5'-UGUA-3' elements within the pre-mRNA. Plays a role in somatic cell fate transitions and pluripotency by regulating widespread changes in gene expression through an APA-dependent function. Binds to chromatin. Binds to, but does not hydrolyze mono- and di-adenosine nucleotides. This Mus musculus (Mouse) protein is Cleavage and polyadenylation specificity factor subunit 5.